Reading from the N-terminus, the 761-residue chain is uncharacterized protein (761 aa).

Residue M1 is modified to N-acetylmethionine. 3 disordered regions span residues 1 to 82 (MEHQ…SSSS), 229 to 320 (SNII…SALA), and 590 to 640 (FNRA…PEQQ). Positions 13–27 (NSGSNRVTVYNGTTL) are enriched in polar residues. The span at 28 to 45 (PTMPKSATPTSSSTTVTT) shows a compositional bias: low complexity. Composition is skewed to polar residues over residues 244-259 (TPVSNSTLKPNLSSPE), 266-276 (NTTSSSSTSDH), 590-604 (FNRASTSLPESSTDD), and 627-640 (SKNSSKKNVLPEQQ).

Phosphorylated by CDC28.

This is an uncharacterized protein from Saccharomyces cerevisiae (strain ATCC 204508 / S288c) (Baker's yeast).